The chain runs to 288 residues: Glycine--tRNA ligase alpha subunit (288 aa).

The protein belongs to the class-II aminoacyl-tRNA synthetase family. In terms of assembly, tetramer of two alpha and two beta subunits.

Its subcellular location is the cytoplasm. The catalysed reaction is tRNA(Gly) + glycine + ATP = glycyl-tRNA(Gly) + AMP + diphosphate. The protein is Glycine--tRNA ligase alpha subunit of Rickettsia canadensis (strain McKiel).